Consider the following 165-residue polypeptide: MPLNREDKQAVVAEVSAQVAKAQTVVLAEYRGIAVGDLTKLRAKAREQQVYLRVLKNTLARRAVEGTPFAPLAEQMTGPLIYGISEDAIAAAKVVNDFSKSNEKLVIKAGSFDGKVMDKAGVQALASIPSREELLSKLLFVMQSPVSGFARALAALAEKKQAEAA.

It belongs to the universal ribosomal protein uL10 family. As to quaternary structure, part of the ribosomal stalk of the 50S ribosomal subunit. The N-terminus interacts with L11 and the large rRNA to form the base of the stalk. The C-terminus forms an elongated spine to which L12 dimers bind in a sequential fashion forming a multimeric L10(L12)X complex.

Functionally, forms part of the ribosomal stalk, playing a central role in the interaction of the ribosome with GTP-bound translation factors. This is Large ribosomal subunit protein uL10 from Burkholderia cenocepacia (strain HI2424).